The sequence spans 661 residues: MKLITTLLLCSGLLLTLTQGEEAQEIDCNDEAVFQAVDFSLKQFNPGVKSGNQYMLHRVIEGTKTDGSPTFYSFKYLIKEGNCSAQSGLAWQDCDFKDAEEAATGECTATVGKRENEFFIVTQTCKIAPSKAPILKAYFPCIGCVHAISTDSPDLEPVLKHSIEHFNNNTDHSHLFTLRKVKSAHRQVVAGLNFDITYTIVQTNCSKERFPSLHGDCVALPNGDDGECRGNLFMDINNKIANFSQSCTLYSGDDLVEALPKPCPGCPRDIPVDSPELKEVLGHSIAQLNAENDHPFYYKIDTVKKATSQVVAGTKYVIEFIARETKCSKESNTELAEDCEIKHLGQSLDCNANVYMRPWENKVVPTVKCQALDMTEMARRPPGFSPFRSVTVQETKEGRTVSPPYIAREQEERDAETEQGPTHGHGWLHEKQIKANKNHRGHKHGHDHGHWSPRRHGLGHGHQKPHGLGHGHQLKLDYLRHQREDGDDHTHTVGHGHGHGHGHGHGHGHGHGHGHGHGHGHGHGKHTNKDKNSVKQTTQRTESLASSSEYSTTSTQMQGRTEGPTLTPPRAQPTVTSSGFQDSDFIEDVVATTPPYDTGAHDDLIPDIHVQPDSLSFKLISDFPEATSPKCPGRPWKPASWEDPNTETTEFSDFDLLDALS.

An N-terminal signal peptide occupies residues 1 to 20 (MKLITTLLLCSGLLLTLTQG). The region spanning 28-131 (CNDEAVFQAV…TQTCKIAPSK (104 aa)) is the Cystatin kininogen-type 1 domain. 9 disulfides stabilise this stretch: cysteine 28/cysteine 631, cysteine 83/cysteine 94, cysteine 107/cysteine 125, cysteine 141/cysteine 144, cysteine 205/cysteine 217, cysteine 228/cysteine 247, cysteine 263/cysteine 266, cysteine 327/cysteine 339, and cysteine 350/cysteine 369. N-linked (GlcNAc...) asparagine glycosylation is present at asparagine 82. The Cystatin kininogen-type 2 domain maps to 150–253 (TDSPDLEPVL…SQSCTLYSGD (104 aa)). N-linked (GlcNAc...) asparagine glycans are attached at residues asparagine 168 and asparagine 204. N-linked (GlcNAc...) asparagine glycosylation is present at asparagine 242. The Cystatin kininogen-type 3 domain occupies 272–375 (VDSPELKEVL…TVKCQALDMT (104 aa)). Serine 331 is subject to Phosphoserine. 3 disordered regions span residues 405-471 (YIAR…LGHG), 485-583 (DGDD…FQDS), and 626-661 (ATSP…DALS). Basic residues-rich tracts occupy residues 434–471 (KANK…LGHG) and 492–526 (TVGH…HGKH). Over residues 541–555 (TESLASSSEYSTTST) the composition is skewed to low complexity. Acidic residues predominate over residues 650-661 (EFSDFDLLDALS).

As to quaternary structure, isoform LMW interacts with CRISP3. Bradykinin is released from kininogen by plasma kallikrein. In terms of processing, phosphorylated by FAM20C in the extracellular medium. Post-translationally, bradykinin is inactivated by ACE, which removes the dipeptide Arg-Phe from its C-terminus. As to expression, plasma.

It is found in the secreted. It localises to the extracellular space. Kininogens are inhibitors of thiol proteases. HMW-kininogen plays an important role in blood coagulation by helping to position optimally prekallikrein and factor XI next to factor XII; HMW-kininogen inhibits the thrombin- and plasmin-induced aggregation of thrombocytes. LMW-kininogen inhibits the aggregation of thrombocytes. LMW-kininogen is in contrast to HMW-kininogen not involved in blood clotting. Its function is as follows. The active peptide bradykinin is a potent vasodilatator that is released from HMW-kininogen shows a variety of physiological effects: (A) influence in smooth muscle contraction, (B) induction of hypotension, (C) natriuresis and diuresis, (D) decrease in blood glucose level, (E) it is a mediator of inflammation and causes (E1) increase in vascular permeability, (E2) stimulation of nociceptors (4E3) release of other mediators of inflammation (e.g. prostaglandins), (F) it has a cardioprotective effect (directly via bradykinin action, indirectly via endothelium-derived relaxing factor action). The polypeptide is Kininogen-1 (Kng1) (Mus musculus (Mouse)).